The following is a 178-amino-acid chain: Protein GrpE (178 aa).

Belongs to the GrpE family. In terms of assembly, homodimer.

It is found in the cytoplasm. Participates actively in the response to hyperosmotic and heat shock by preventing the aggregation of stress-denatured proteins, in association with DnaK and GrpE. It is the nucleotide exchange factor for DnaK and may function as a thermosensor. Unfolded proteins bind initially to DnaJ; upon interaction with the DnaJ-bound protein, DnaK hydrolyzes its bound ATP, resulting in the formation of a stable complex. GrpE releases ADP from DnaK; ATP binding to DnaK triggers the release of the substrate protein, thus completing the reaction cycle. Several rounds of ATP-dependent interactions between DnaJ, DnaK and GrpE are required for fully efficient folding. The sequence is that of Protein GrpE from Rickettsia prowazekii (strain Madrid E).